The following is a 376-amino-acid chain: uncharacterized protein (376 aa).

Belongs to the YCR102c/YLR460c/YNL134c family.

This is an uncharacterized protein from Saccharomyces cerevisiae (strain ATCC 204508 / S288c) (Baker's yeast).